Here is a 645-residue protein sequence, read N- to C-terminus: Putative palmitoyltransferase ZDHHC13 (645 aa).

The disordered stretch occupies residues 1–73; it reads MDWSEGDGSH…KSSHPEDSSS (73 aa). Residues 1–314 are Cytoplasmic-facing; the sequence is MDWSEGDGSH…ACLKLLNRYK (314 aa). The segment covering 7–20 has biased composition (basic and acidic residues); that stretch reads DGSHSHGHMGDSCH. Over residues 23-33 the composition is skewed to basic residues; sequence GGGHSHGHGHS. Residues 34 to 43 are compositionally biased toward gly residues; it reads HGGSGFGGFM. ANK repeat units lie at residues 104 to 133, 138 to 167, 171 to 200, 204 to 234, and 239 to 268; these read ENVT…VIDQ, LNST…DPSL, EGYR…EVDL, NGQT…SVNA, and NRNS…SVDM. A helical transmembrane segment spans residues 315–335; sequence VCLQSVFSVVVVGAFGAILDM. A topological domain (lumenal) is located at residue R336. The chain crosses the membrane as a helical span at residues 337–357; that stretch reads TESWLLKGILLACIMAVINLA. The Cytoplasmic segment spans residues 358–369; sequence SRQLATVAVRSL. A helical transmembrane segment spans residues 370-390; the sequence is IPSTGLIASVFWMVVTWVLWF. Topologically, residues 391 to 394 are lumenal; the sequence is LPDE. The chain crosses the membrane as a helical span at residues 395 to 415; that stretch reads PSAAVQMLFTVNITAVLYYYI. Topologically, residues 416-492 are cytoplasmic; that stretch reads RSCRTDPGHV…NGCIGARNHP (77 aa). One can recognise a DHHC domain in the interval 449–499; that stretch reads IFCTSCMMRKPMRANHCFSCNACVAKQDHHSIWINGCIGARNHPFFVLFLV. A helical membrane pass occupies residues 493–513; it reads FFVLFLVALNFLCIWMFYGSI. Over 514–542 the chain is Lumenal; that stretch reads TYWSRHCPLHYSEEGIWGALTALMGCSPW. The chain crosses the membrane as a helical span at residues 543-563; it reads LLYVFCFVFFHTTWASILLVL. Residues 564 to 645 lie on the Cytoplasmic side of the membrane; that stretch reads QLYQIAFLGL…RDMFSSPDAV (82 aa).

The protein belongs to the DHHC palmitoyltransferase family. AKR/ZDHHC17 subfamily.

The protein resides in the golgi apparatus membrane. Its subcellular location is the cytoplasmic vesicle membrane. Its function is as follows. Putative palmitoyltransferase that could catalyze the addition of palmitate onto various protein substrates. This Danio rerio (Zebrafish) protein is Putative palmitoyltransferase ZDHHC13.